Consider the following 280-residue polypeptide: Manganese import system permease protein ScaB (280 aa).

8 consecutive transmembrane segments (helical) span residues 18–38 (ALIT…FIIL), 61–81 (ILGI…SILI), 94–114 (TAIG…IGVA), 139–159 (TIGV…PLLL), 174–194 (VKIY…TAMQ), 196–216 (VGTI…YLYA), 222–242 (MMLL…FIGY), and 246–266 (IAVG…SFFI).

Belongs to the ABC-3 integral membrane protein family.

The protein resides in the cell membrane. Functionally, part of an ABC transporter complex involved in manganese import. The polypeptide is Manganese import system permease protein ScaB (Streptococcus parasanguinis).